The primary structure comprises 380 residues: Ceramide synthase 2 (380 aa).

Topologically, residues 1-40 (MLQTLYDYFWWERLWLPVNLTWADLEDRDGRVYAKASDLY) are lumenal. Asn19 carries an N-linked (GlcNAc...) asparagine glycan. Residues 41–61 (ITLPLALLFLIVRYFFELYVA) form a helical membrane-spanning segment. The tract at residues 67–128 (LLNIKEKTRL…RRRRNQDRPS (62 aa)) is homeobox-like. Positions 131-332 (KKFREASWRF…ILRMAHKFIT (202 aa)) constitute a TLC domain. 4 helical membrane-spanning segments follow: residues 140–160 (FTFY…KPWF), 181–201 (WYYM…ASDV), 209–229 (QIIH…ANYI), and 264–284 (IFIV…PFWI). The Last loop motif signature appears at 291–300 (YPLELYPAFF). The helical transmembrane segment at 304 to 324 (FFNSMMGVLQLLHIFWAYLIL) threads the bilayer. Over 325 to 380 (RMAHKFITGKLVEDERSDREETESSEGEEAAAGGGAKSRPLANGHPILNNNHRKND) the chain is Cytoplasmic. Residues 338–380 (DERSDREETESSEGEEAAAGGGAKSRPLANGHPILNNNHRKND) are disordered. Ser341 is subject to Phosphoserine. Acidic residues predominate over residues 344–353 (EETESSEGEE). Thr346 bears the Phosphothreonine mark. 2 positions are modified to phosphoserine: Ser348 and Ser349.

Interacts with ATP6V0C, ASGR1, ASGR2 and SLC22A1/OCT1. Interacts with ELOV1, HSD17B12 and TECR. Interacts with NDUFS2. Interacts with PAQR4; the interaction regulates the stability and activity of CERS2 and is inhibited in presence of ceramides. Post-translationally, acetylated. Deacetylation by SIRT3 increases enzyme activity and promotes mitochondrial ceramide accumulation. Phosphorylated at the C-terminus by CK2, leading to increase the ceramide synthase activity. In terms of tissue distribution, expressed in kidney, liver, brain, heart, placenta and lung.

It localises to the endoplasmic reticulum membrane. The enzyme catalyses a very long-chain fatty acyl-CoA + a sphingoid base = an N-(very-long-chain fatty acyl)-sphingoid base + CoA + H(+). It catalyses the reaction docosanoyl-CoA + sphinganine = N-docosanoylsphinganine + CoA + H(+). The catalysed reaction is tetracosanoyl-CoA + sphinganine = N-tetracosanoylsphinganine + CoA + H(+). It carries out the reaction hexacosanoyl-CoA + sphinganine = N-hexacosanoylsphinganine + CoA + H(+). The enzyme catalyses (15Z)-tetracosenoyl-CoA + sphinganine = N-(15Z-tetracosenoyl)-sphinganine + CoA + H(+). It catalyses the reaction 2-hydroxytetracosanoyl-CoA + sphinganine = N-(2-hydroxytetracosanoyl)-sphinganine + CoA + H(+). The catalysed reaction is 2-hydroxydocosanoyl-CoA + sphinganine = N-(2-hydroxydocosanoyl)-sphinganine + CoA + H(+). It carries out the reaction 2-hydroxytetracosenoyl-CoA + sphinganine = N-(2-hydroxytetracosenoyl)-sphinganine + CoA + H(+). The enzyme catalyses tetracosenoyl-CoA + sphinganine = an N-tetracosenoylsphinganine + CoA + H(+). It catalyses the reaction hexacosenoyl-CoA + sphinganine = N-hexacosenoylsphinganine + CoA + H(+). The catalysed reaction is tetracosanoyl-CoA + sphing-4-enine = N-tetracosanoyl-sphing-4-enine + CoA + H(+). It carries out the reaction tetracosenoyl-CoA + sphing-4-enine = N-(tetracosenoyl)-sphing-4-enine + CoA + H(+). The enzyme catalyses heptadecasphing-4-enine + tetracosanoyl-CoA = N-tetracosanoyl-heptadecasphing-4-enine + CoA + H(+). It catalyses the reaction a fatty acyl-CoA + sphing-4-enine = an N-acylsphing-4-enine + CoA + H(+). The catalysed reaction is sphing-4-enine + hexadecanoyl-CoA = N-hexadecanoylsphing-4-enine + CoA + H(+). It carries out the reaction sphing-4-enine + octadecanoyl-CoA = N-octadecanoylsphing-4-enine + CoA + H(+). The enzyme catalyses eicosanoyl-CoA + sphing-4-enine = N-eicosanoyl-sphing-4-enine + CoA + H(+). It catalyses the reaction sphinganine + hexadecanoyl-CoA = N-hexadecanoylsphinganine + CoA + H(+). The catalysed reaction is sphinganine + octadecanoyl-CoA = N-(octadecanoyl)-sphinganine + CoA + H(+). It carries out the reaction sphinganine + (9Z)-octadecenoyl-CoA = N-(9Z-octadecenoyl)-sphinganine + CoA + H(+). The enzyme catalyses eicosanoyl-CoA + sphinganine = N-eicosanoylsphinganine + CoA + H(+). It participates in lipid metabolism; sphingolipid metabolism. With respect to regulation, ceramide synthase activity is inhibited by sphingosine-1-phosphate. In terms of biological role, ceramide synthase that catalyzes the transfer of the acyl chain from acyl-CoA to a sphingoid base, with high selectivity toward very-long-chain fatty acyl-CoA (chain length C22-C27). N-acylates sphinganine and sphingosine bases to form dihydroceramides and ceramides in de novo synthesis and salvage pathways, respectively. Plays a non-redundant role in the synthesis of ceramides with very-long-chain fatty acids in kidney, liver and brain. Regulates the abundance of myelin-specific sphingolipids galactosylceramide and sulfatide that affects myelin sheath architecture and motor neuron functions. This Homo sapiens (Human) protein is Ceramide synthase 2.